The following is a 456-amino-acid chain: Bifunctional protein GlmU (456 aa).

The segment at 1-229 is pyrophosphorylase; that stretch reads MTKKALSAVI…VMEVEGANNR (229 aa). UDP-N-acetyl-alpha-D-glucosamine is bound by residues 11-14, K25, Q76, 81-82, 103-105, G140, E154, N169, and N227; these read LAAG, GT, and YGD. D105 contacts Mg(2+). N227 is a Mg(2+) binding site. A linker region spans residues 230–250; that stretch reads LQLAALERYFQNKQASKLLLE. Residues 251–456 are N-acetyltransferase; the sequence is GVMIYDPARF…QGWQRPIKKK (206 aa). UDP-N-acetyl-alpha-D-glucosamine is bound by residues R333 and K351. H363 (proton acceptor) is an active-site residue. Residues Y366 and N377 each contribute to the UDP-N-acetyl-alpha-D-glucosamine site. Acetyl-CoA-binding positions include A380, 386-387, S405, A423, and R440; that span reads NY.

It in the N-terminal section; belongs to the N-acetylglucosamine-1-phosphate uridyltransferase family. This sequence in the C-terminal section; belongs to the transferase hexapeptide repeat family. In terms of assembly, homotrimer. Requires Mg(2+) as cofactor.

It is found in the cytoplasm. It carries out the reaction alpha-D-glucosamine 1-phosphate + acetyl-CoA = N-acetyl-alpha-D-glucosamine 1-phosphate + CoA + H(+). It catalyses the reaction N-acetyl-alpha-D-glucosamine 1-phosphate + UTP + H(+) = UDP-N-acetyl-alpha-D-glucosamine + diphosphate. It participates in nucleotide-sugar biosynthesis; UDP-N-acetyl-alpha-D-glucosamine biosynthesis; N-acetyl-alpha-D-glucosamine 1-phosphate from alpha-D-glucosamine 6-phosphate (route II): step 2/2. Its pathway is nucleotide-sugar biosynthesis; UDP-N-acetyl-alpha-D-glucosamine biosynthesis; UDP-N-acetyl-alpha-D-glucosamine from N-acetyl-alpha-D-glucosamine 1-phosphate: step 1/1. It functions in the pathway bacterial outer membrane biogenesis; LPS lipid A biosynthesis. In terms of biological role, catalyzes the last two sequential reactions in the de novo biosynthetic pathway for UDP-N-acetylglucosamine (UDP-GlcNAc). The C-terminal domain catalyzes the transfer of acetyl group from acetyl coenzyme A to glucosamine-1-phosphate (GlcN-1-P) to produce N-acetylglucosamine-1-phosphate (GlcNAc-1-P), which is converted into UDP-GlcNAc by the transfer of uridine 5-monophosphate (from uridine 5-triphosphate), a reaction catalyzed by the N-terminal domain. The sequence is that of Bifunctional protein GlmU from Haemophilus influenzae (strain 86-028NP).